We begin with the raw amino-acid sequence, 556 residues long: Interleukin-1 receptor-like 1 (556 aa).

An N-terminal signal peptide occupies residues 1-18 (MGFWILAILTILMYSTAA). Ig-like C2-type domains lie at 19–103 (KFSK…ANVT) and 114–197 (PDYL…VTAT). Topologically, residues 19–328 (KFSKQSWGLE…SRKNPIDHHS (310 aa)) are extracellular. A disulfide bridge links cysteine 36 with cysteine 87. 5 N-linked (GlcNAc...) asparagine glycosylation sites follow: asparagine 54, asparagine 95, asparagine 101, asparagine 140, and asparagine 191. Intrachain disulfides connect cysteine 111/cysteine 151 and cysteine 133/cysteine 181. The flexible linker stretch occupies residues 198–211 (RSFTVKDEQGFSLF). The Ig-like C2-type 3 domain occupies 212-319 (PVIGAPAQNE…GLRRHTVRLS (108 aa)). N-linked (GlcNAc...) asparagine glycosylation is found at asparagine 232, asparagine 254, and asparagine 273. Intrachain disulfides connect cysteine 235–cysteine 303 and cysteine 238–cysteine 282. Lysine 321 participates in a covalent cross-link: Glycyl lysine isopeptide (Lys-Gly) (interchain with G-Cter in ubiquitin). Residues 329–349 (IYCIIAVCSVFLMLINVLVII) traverse the membrane as a helical segment. Residues 350–556 (LKMFWIEATL…SLTPLAAQKQ (207 aa)) lie on the Cytoplasmic side of the membrane. The TIR domain occupies 375 to 535 (KLYDAYVVYP…KFWKHVRYQM (161 aa)). The active site involves glutamate 461.

It belongs to the interleukin-1 receptor family. Interacts with MYD88, IRAK1, IRAK4, and TRAF6. Bound to its ligand IL-33, interacts with IL1RAP to form the minimal interleukin-33 signaling complex with a 1:1:1 stoichiometry. Interacts with KIT (bound to KITLG/SCF). A mast cell-specific KITLG/SCF-induced interleukin-33 signaling complex contains IL1RL1, IL1RAP, KIT and MYD88. Interacts with TMED1. Post-translationally, ubiquitinated at Lys-321 in a FBXL19-mediated manner; leading to proteasomal degradation. Ubiquitination by TRAF6 via 'Lys-27'-linked polyubiquitination and deubiquitination by USP38 serves as a critical regulatory mechanism for fine-tuning IL1RL1-mediated inflammatory response. Highly expressed in kidney, lung, placenta, stomach, skeletal muscle, colon and small intestine. Isoform A is prevalently expressed in the lung, testis, placenta, stomach and colon. Isoform B is more abundant in the brain, kidney and the liver. Isoform C is not detected in brain, heart, liver, kidney and skeletal muscle. Expressed on T-cells in fibrotic liver; at protein level. Overexpressed in fibrotic and cirrhotic liver.

It localises to the cell membrane. Its subcellular location is the secreted. The catalysed reaction is NAD(+) + H2O = ADP-D-ribose + nicotinamide + H(+). Functionally, receptor for interleukin-33 (IL-33) which plays crucial roles in innate and adaptive immunity, contributing to tissue homeostasis and responses to environmental stresses together with coreceptor IL1RAP. Its stimulation recruits MYD88, IRAK1, IRAK4, and TRAF6, followed by phosphorylation of MAPK3/ERK1 and/or MAPK1/ERK2, MAPK14, and MAPK8. Possibly involved in helper T-cell function. Upon tissue injury, induces UCP2-dependent mitochondrial rewiring that attenuates the generation of reactive oxygen species and preserves the integrity of Krebs cycle required for persistent production of itaconate and subsequent GATA3-dependent differentiation of inflammation-resolving alternatively activated macrophages. In terms of biological role, inhibits IL-33 signaling. The sequence is that of Interleukin-1 receptor-like 1 (IL1RL1) from Homo sapiens (Human).